A 634-amino-acid chain; its full sequence is BTB/POZ domain-containing protein At1g03010 (634 aa).

The BTB domain maps to 38–103; the sequence is SDLTVQVGSS…CYGINIEINL (66 aa). Residues 205–503 form the NPH3 domain; the sequence is DWWGKSLAVL…VQVLYFEQIR (299 aa). A Phosphotyrosine modification is found at tyrosine 444. The stretch at 542 to 580 forms a coiled coil; it reads RDNYASVRRENRELKLEVARMRMRLTDLEKDHISIKQEL.

This sequence belongs to the NPH3 family.

It participates in protein modification; protein ubiquitination. In terms of biological role, may act as a substrate-specific adapter of an E3 ubiquitin-protein ligase complex (CUL3-RBX1-BTB) which mediates the ubiquitination and subsequent proteasomal degradation of target proteins. The sequence is that of BTB/POZ domain-containing protein At1g03010 from Arabidopsis thaliana (Mouse-ear cress).